Consider the following 143-residue polypeptide: Large-conductance mechanosensitive channel (143 aa).

2 helical membrane-spanning segments follow: residues 10 to 30 (FAVK…GAFS) and 89 to 109 (GSFI…FLMV).

This sequence belongs to the MscL family. Homopentamer.

It localises to the cell inner membrane. In terms of biological role, channel that opens in response to stretch forces in the membrane lipid bilayer. May participate in the regulation of osmotic pressure changes within the cell. This Burkholderia vietnamiensis (strain G4 / LMG 22486) (Burkholderia cepacia (strain R1808)) protein is Large-conductance mechanosensitive channel.